Here is a 257-residue protein sequence, read N- to C-terminus: Protein vip1 (257 aa).

One can recognise an RRM domain in the interval 3–76; the sequence is NQVIVTNISP…NKIQITSEDG (74 aa). The segment at 74 to 99 is disordered; sequence EDGGAASTTDQGGAGGDQAARQEDKP. Low complexity predominate over residues 75–84; the sequence is DGGAASTTDQ. A phosphoserine mark is found at Ser132 and Ser177. Residues 217–257 form a disordered region; that stretch reads ARRLADAKNQAEGTASPASSTPTAPAEKEPTAPTTESKTTE. Thr230 is subject to Phosphothreonine. Residues 230 to 257 show a composition bias toward low complexity; the sequence is TASPASSTPTAPAEKEPTAPTTESKTTE. 2 positions are modified to phosphoserine: Ser232 and Ser235.

The sequence is that of Protein vip1 (vip1) from Schizosaccharomyces pombe (strain 972 / ATCC 24843) (Fission yeast).